We begin with the raw amino-acid sequence, 115 residues long: UPF0125 protein VP0646 (115 aa).

The tract at residues Arg-92–Lys-115 is disordered.

This sequence belongs to the UPF0125 (RnfH) family.

This Vibrio parahaemolyticus serotype O3:K6 (strain RIMD 2210633) protein is UPF0125 protein VP0646.